Here is a 67-residue protein sequence, read N- to C-terminus: Beta-defensin 9 (67 aa).

The N-terminal stretch at 1-24 is a signal peptide; the sequence is MRTLCSLLLICCLLFSYTTPAANS. 3 cysteine pairs are disulfide-bonded: C34-C62, C41-C55, and C45-C63.

Belongs to the beta-defensin family. As to expression, weakly expressed in adult and neonatal brain.

It is found in the secreted. Functionally, has antibacterial activity. This Mus musculus (Mouse) protein is Beta-defensin 9 (Defb9).